Consider the following 263-residue polypeptide: MKIAIAGASGRMGQMLIDTVLRTPGVTLGAALDRPGSDAVGQDAGVKLGKTTGVIVTDDVRAGLSQADVLIDFTRPDATLNHLNVARELGTAVVIGTTGFTAEQKASFKTYGESIGVVWAPNMSVGVNATFKLIEVAAKILAQGYDVEIIEAHHKHKIDAPSGTALKMGEIVAEAQGTKLADRAVYAREGETGPRELGTIGFATVRGGDIVGDHTVLFAGDGERIEITHRSNTRQSYAEGAVRAAVYVAGKKGLYDMNDVLGL.

NAD(+) is bound by residues 7 to 12 (GASGRM) and Asp-33. Residue Arg-34 participates in NADP(+) binding. NAD(+) is bound by residues 96–98 (GTT) and 120–123 (APNM). His-153 functions as the Proton donor/acceptor in the catalytic mechanism. (S)-2,3,4,5-tetrahydrodipicolinate is bound at residue His-154. Lys-157 functions as the Proton donor in the catalytic mechanism. 163 to 164 (GT) contributes to the (S)-2,3,4,5-tetrahydrodipicolinate binding site.

It belongs to the DapB family.

It is found in the cytoplasm. The enzyme catalyses (S)-2,3,4,5-tetrahydrodipicolinate + NAD(+) + H2O = (2S,4S)-4-hydroxy-2,3,4,5-tetrahydrodipicolinate + NADH + H(+). The catalysed reaction is (S)-2,3,4,5-tetrahydrodipicolinate + NADP(+) + H2O = (2S,4S)-4-hydroxy-2,3,4,5-tetrahydrodipicolinate + NADPH + H(+). Its pathway is amino-acid biosynthesis; L-lysine biosynthesis via DAP pathway; (S)-tetrahydrodipicolinate from L-aspartate: step 4/4. Catalyzes the conversion of 4-hydroxy-tetrahydrodipicolinate (HTPA) to tetrahydrodipicolinate. This is 4-hydroxy-tetrahydrodipicolinate reductase from Ralstonia pickettii (strain 12J).